Reading from the N-terminus, the 354-residue chain is UDP-N-acetylglucosamine--N-acetylmuramyl-(pentapeptide) pyrophosphoryl-undecaprenol N-acetylglucosamine transferase (354 aa).

Residues 11 to 13 (SAG), R164, S194, and Q289 contribute to the UDP-N-acetyl-alpha-D-glucosamine site.

It belongs to the glycosyltransferase 28 family. MurG subfamily.

Its subcellular location is the cell membrane. It carries out the reaction di-trans,octa-cis-undecaprenyl diphospho-N-acetyl-alpha-D-muramoyl-L-alanyl-D-glutamyl-meso-2,6-diaminopimeloyl-D-alanyl-D-alanine + UDP-N-acetyl-alpha-D-glucosamine = di-trans,octa-cis-undecaprenyl diphospho-[N-acetyl-alpha-D-glucosaminyl-(1-&gt;4)]-N-acetyl-alpha-D-muramoyl-L-alanyl-D-glutamyl-meso-2,6-diaminopimeloyl-D-alanyl-D-alanine + UDP + H(+). It participates in cell wall biogenesis; peptidoglycan biosynthesis. Cell wall formation. Catalyzes the transfer of a GlcNAc subunit on undecaprenyl-pyrophosphoryl-MurNAc-pentapeptide (lipid intermediate I) to form undecaprenyl-pyrophosphoryl-MurNAc-(pentapeptide)GlcNAc (lipid intermediate II). This is UDP-N-acetylglucosamine--N-acetylmuramyl-(pentapeptide) pyrophosphoryl-undecaprenol N-acetylglucosamine transferase from Shouchella clausii (strain KSM-K16) (Alkalihalobacillus clausii).